The primary structure comprises 3092 residues: Probable polyketide synthase 45 (3092 aa).

The region spanning 10–430 (DNDVAIIGIG…GSNVCLILTE (421 aa)) is the Ketosynthase family 3 (KS3) domain. Catalysis depends on for beta-ketoacyl synthase activity residues cysteine 170, histidine 315, and histidine 353. The segment at 640–673 (GILASISIGHSLGEVSSAVCSGMIDLETGCFIIY) is acyl/malonyl transferase. The active-site For acyl/malonyl transferase activity is serine 650. Residues 967-1087 (INQLGNRNER…GKFSITKHND (121 aa)) are N-terminal hotdog fold. Residues 967 to 1254 (INQLGNRNER…YTQLTPYKNQ (288 aa)) form the PKS/mFAS DH domain. The active-site Proton acceptor; for dehydratase activity is the histidine 999. The interval 1103–1254 (NFVTIQKKEL…YTQLTPYKNQ (152 aa)) is C-terminal hotdog fold. Residue aspartate 1165 is the Proton donor; for dehydratase activity of the active site. Residues 2566–2644 (SDDLSIREEI…QLIQSVTDAM (79 aa)) form the Carrier domain. At serine 2604 the chain carries O-(pantetheine 4'-phosphoryl)serine. Residues 2705 to 2725 (NTVFLTGSSGFIGIYILFYLI) form a helical membrane-spanning segment.

It depends on pantetheine 4'-phosphate as a cofactor.

Its subcellular location is the membrane. Its function is as follows. Probable polyketide synthase. The sequence is that of Probable polyketide synthase 45 (pks45) from Dictyostelium discoideum (Social amoeba).